The chain runs to 1011 residues: Vacuolar membrane protease (1011 aa).

Over methionine 1 to asparagine 14 the chain is Cytoplasmic. Residues leucine 15–phenylalanine 35 form a helical membrane-spanning segment. Residues arginine 36 to leucine 352 lie on the Vacuolar side of the membrane. 5 residues coordinate Zn(2+): histidine 149, aspartate 161, glutamate 194, glutamate 219, and histidine 293. The chain crosses the membrane as a helical span at residues phenylalanine 353 to valine 373. At alanine 374–arginine 390 the chain is on the cytoplasmic side. The helical transmembrane segment at leucine 391 to glutamine 411 threads the bilayer. The Vacuolar segment spans residues leucine 412–aspartate 420. A helical membrane pass occupies residues tyrosine 421–serine 441. The Cytoplasmic portion of the chain corresponds to serine 442–aspartate 451. A helical transmembrane segment spans residues phenylalanine 452–threonine 472. At arginine 473 to proline 487 the chain is on the vacuolar side. The chain crosses the membrane as a helical span at residues phenylalanine 488–phenylalanine 508. Over lysine 509–glutamine 647 the chain is Cytoplasmic. The segment at methionine 534–serine 585 is disordered. A compositionally biased stretch (basic residues) spans serine 542 to proline 567. Polar residues predominate over residues arginine 568–glutamate 578. A helical transmembrane segment spans residues phenylalanine 648 to glycine 668. The Vacuolar segment spans residues alanine 669 to threonine 681. Residue asparagine 671 is glycosylated (N-linked (GlcNAc...) asparagine). Residues threonine 682–phenylalanine 702 traverse the membrane as a helical segment. Topologically, residues threonine 703–serine 708 are cytoplasmic. The chain crosses the membrane as a helical span at residues phenylalanine 709 to proline 729. The Vacuolar segment spans residues proline 730 to leucine 1011. Residues asparagine 751, asparagine 825, and asparagine 854 are each glycosylated (N-linked (GlcNAc...) asparagine).

Belongs to the peptidase M28 family. Requires Zn(2+) as cofactor.

It localises to the vacuole membrane. In terms of biological role, may be involved in vacuolar sorting and osmoregulation. In Eremothecium gossypii (strain ATCC 10895 / CBS 109.51 / FGSC 9923 / NRRL Y-1056) (Yeast), this protein is Vacuolar membrane protease.